A 344-amino-acid chain; its full sequence is Nicotinate-nucleotide--dimethylbenzimidazole phosphoribosyltransferase (344 aa).

Glu-305 (proton acceptor) is an active-site residue.

This sequence belongs to the CobT family.

The catalysed reaction is 5,6-dimethylbenzimidazole + nicotinate beta-D-ribonucleotide = alpha-ribazole 5'-phosphate + nicotinate + H(+). It participates in nucleoside biosynthesis; alpha-ribazole biosynthesis; alpha-ribazole from 5,6-dimethylbenzimidazole: step 1/2. Catalyzes the synthesis of alpha-ribazole-5'-phosphate from nicotinate mononucleotide (NAMN) and 5,6-dimethylbenzimidazole (DMB). The chain is Nicotinate-nucleotide--dimethylbenzimidazole phosphoribosyltransferase from Agrobacterium fabrum (strain C58 / ATCC 33970) (Agrobacterium tumefaciens (strain C58)).